A 511-amino-acid polypeptide reads, in one-letter code: Cytochrome P450 4A7 (511 aa).

Residues 1-4 (MSVS) constitute a propeptide that is removed on maturation. Heme contacts are provided by E322 and C458.

It belongs to the cytochrome P450 family. Requires heme as cofactor. Liver, kidney, small intestine.

Its subcellular location is the endoplasmic reticulum membrane. It localises to the microsome membrane. The catalysed reaction is an omega-methyl-long-chain fatty acid + reduced [NADPH--hemoprotein reductase] + O2 = an omega-hydroxy-long-chain fatty acid + oxidized [NADPH--hemoprotein reductase] + H2O + H(+). Its function is as follows. Cytochromes P450 are a group of heme-thiolate monooxygenases. In liver microsomes, this enzyme is involved in an NADPH-dependent electron transport pathway. It oxidizes a variety of structurally unrelated compounds, including steroids, fatty acids, and xenobiotics. In terms of biological role, the kidney P-450 system is rather specialized for the omega-hydroxylation of fatty acids. Both P450-KA1 and P450-KA2 catalyze the omega- and (omega-1)-hydroxylation of various fatty acids with no drug-metabolizing activity, and hydroxylate prostaglandin A1 and A2 solely at the omega-position. In Oryctolagus cuniculus (Rabbit), this protein is Cytochrome P450 4A7 (CYP4A7).